The primary structure comprises 878 residues: Alanine--tRNA ligase (878 aa).

Histidine 567, histidine 571, cysteine 669, and histidine 673 together coordinate Zn(2+).

It belongs to the class-II aminoacyl-tRNA synthetase family. Requires Zn(2+) as cofactor.

The protein localises to the cytoplasm. It carries out the reaction tRNA(Ala) + L-alanine + ATP = L-alanyl-tRNA(Ala) + AMP + diphosphate. Its function is as follows. Catalyzes the attachment of alanine to tRNA(Ala) in a two-step reaction: alanine is first activated by ATP to form Ala-AMP and then transferred to the acceptor end of tRNA(Ala). Also edits incorrectly charged Ser-tRNA(Ala) and Gly-tRNA(Ala) via its editing domain. In Rickettsia massiliae (strain Mtu5), this protein is Alanine--tRNA ligase.